Here is a 168-residue protein sequence, read N- to C-terminus: Cytochrome c-type biogenesis protein CcmE (168 aa).

The Cytoplasmic portion of the chain corresponds to 1–7; it reads MTRKQRR. The helical; Signal-anchor for type II membrane protein transmembrane segment at 8-28 threads the bilayer; that stretch reads LMLIGVCGAVLAVALGLVLWA. Over 29-168 the chain is Periplasmic; the sequence is MRGTIVFFRS…SGEKPALRQQ (140 aa). Heme contacts are provided by histidine 122 and tyrosine 126. The interval 134 to 168 is disordered; that stretch reads ALKKQGHWQGEAKHPGGTAPAPQTASGEKPALRQQ.

It belongs to the CcmE/CycJ family.

It is found in the cell inner membrane. In terms of biological role, heme chaperone required for the biogenesis of c-type cytochromes. Transiently binds heme delivered by CcmC and transfers the heme to apo-cytochromes in a process facilitated by CcmF and CcmH. The polypeptide is Cytochrome c-type biogenesis protein CcmE (Methylobacterium nodulans (strain LMG 21967 / CNCM I-2342 / ORS 2060)).